The following is a 386-amino-acid chain: Na(+)/H(+) antiporter NhaA (386 aa).

Helical transmembrane passes span methionine 10–asparagine 30, leucine 58–valine 78, isoleucine 94–isoleucine 114, glycine 124–glycine 144, phenylalanine 154–phenylalanine 174, glutamate 176–leucine 196, methionine 199–leucine 219, isoleucine 253–valine 273, isoleucine 283–valine 303, valine 327–leucine 347, and leucine 361–leucine 381.

The protein belongs to the NhaA Na(+)/H(+) (TC 2.A.33) antiporter family.

The protein resides in the cell inner membrane. It catalyses the reaction Na(+)(in) + 2 H(+)(out) = Na(+)(out) + 2 H(+)(in). In terms of biological role, na(+)/H(+) antiporter that extrudes sodium in exchange for external protons. The chain is Na(+)/H(+) antiporter NhaA from Mannheimia succiniciproducens (strain KCTC 0769BP / MBEL55E).